Reading from the N-terminus, the 273-residue chain is Major prion protein homolog (273 aa).

Residues 1–24 (MARLLTTCCLLALLLAACTDVALS) form the signal peptide. Residues 25-121 (KKGKGKPSGG…QKPWKPPKTN (97 aa)) form a disordered region. 8 repeat units span residues 42-47 (RQPSYP), 48-53 (RQPGYP), 54-59 (HNPGYP), 60-65 (HNPGYP), 66-71 (HNPGYP), 72-77 (HNPGYP), 78-83 (HNPGYP), and 84-89 (QNPGYP). The segment at 42–89 (RQPSYPRQPGYPHNPGYPHNPGYPHNPGYPHNPGYPHNPGYPQNPGYP) is 8 X 6 AA tandem repeats of [HR]-[NQ]-P-G-Y-P. Residues 51 to 94 (GYPHNPGYPHNPGYPHNPGYPHNPGYPHNPGYPQNPGYPHNPGY) are compositionally biased toward low complexity. Cu(2+) contacts are provided by His-66, His-72, and His-78. Cu(2+) contacts are provided by His-90 and Gly-93. Over residues 101–111 (YNPSSGGSYHN) the composition is skewed to polar residues. Cys-192 and Cys-237 form a disulfide bridge. Asn-194, Asn-209, and Asn-218 each carry an N-linked (GlcNAc...) asparagine glycan. Ser-248 carries the GPI-anchor amidated serine lipid modification. The propeptide at 249-273 (GIQLHPADTWLAVLLLLLTTLFAMH) is removed in mature form.

This sequence belongs to the prion family. As to quaternary structure, monomer and homodimer. Has a tendency to aggregate into amyloid fibrils containing a cross-beta spine, formed by a steric zipper of superposed beta-strands. Soluble oligomers may represent an intermediate stage on the path to fibril formation. Copper binding may promote oligomerization. Spinal cord and brain.

The protein resides in the cell membrane. Its function is as follows. Its primary physiological function is unclear. Has cytoprotective activity against internal or environmental stresses. May play a role in neuronal development and synaptic plasticity. May be required for neuronal myelin sheath maintenance. May play a role in iron uptake and iron homeostasis. Soluble oligomers are toxic to cultured neuroblastoma cells and induce apoptosis (in vitro). Association with GPC1 (via its heparan sulfate chains) targets PRNP to lipid rafts. Also provides Cu(2+) or Zn(2+) for the ascorbate-mediated GPC1 deaminase degradation of its heparan sulfate side chains. This Gallus gallus (Chicken) protein is Major prion protein homolog (PRNP).